The chain runs to 1091 residues: Neural cell adhesion molecule 1 (1091 aa).

The N-terminal stretch at 1-19 (MLPAAALPWTLFFLGAAAS) is a signal peptide. Ig-like C2-type domains are found at residues 20–113 (LQVD…VNVK), 116–205 (QKLM…KDIQ), 212–301 (PSVR…ATIH), 308–403 (PKIT…LEVQ), and 406–495 (PKLQ…FILV). Over 20–711 (LQVDIVPSQG…STSPTSGLGT (692 aa)) the chain is Extracellular. Intrachain disulfides connect Cys-41-Cys-96 and Cys-139-Cys-189. Heparin-binding positions include 152-156 (KHKGR) and 161-165 (KKDVR). Asn-222 is a glycosylation site (N-linked (GlcNAc...) asparagine). A disulfide bond links Cys-235 and Cys-287. Asn-315, Asn-347, Asn-423, Asn-449, and Asn-478 each carry an N-linked (GlcNAc...) asparagine glycan. Cys-329 and Cys-385 form a disulfide bridge. Cys-426 and Cys-479 are oxidised to a cystine. 2 consecutive Fibronectin type-III domains span residues 499–598 (TPSS…TQPV) and 600–696 (EPSA…SAQP). A helical transmembrane segment spans residues 712-729 (AAIVGILIVIFVLLLVAV). Residues 730–1091 (DVTCYFLNKC…ATEIRHLQQK (362 aa)) are Cytoplasmic-facing. 4 disordered regions span residues 756–809 (GAKG…TEPE), 840–916 (ATAQ…NNLS), 937–1023 (ETSK…GTFK), and 1041–1091 (TPAS…LQQK). Positions 758–799 (KGKDMEEGKAAFSKDESKEPIVEVRTEEERTPNHDGGKHTEP) are enriched in basic and acidic residues. Residues 845-856 (SPTSETTTLTSS) show a composition bias toward low complexity. Composition is skewed to polar residues over residues 904–916 (DTPS…NNLS) and 980–1012 (QPST…PSQN). Basic and acidic residues-rich tracts occupy residues 1013–1023 (EDFKMDEGTFK) and 1068–1091 (KTEK…LQQK).

Post-translationally, polysialylated by ST8SIA2 and ST8SIA4. Polysialylation modulates cell interactions by confering both attractive and repulsive properties that are highly regulated by ST8SIA2 and ST8SIA4. Polysialylation is formed on a-2,3-linked sialic acid of core glycans.

It localises to the cell membrane. Functionally, this protein is a cell adhesion molecule involved in neuron-neuron adhesion, neurite fasciculation, outgrowth of neurites, etc. This is Neural cell adhesion molecule 1 from Gallus gallus (Chicken).